A 141-amino-acid chain; its full sequence is Large ribosomal subunit protein uL16 (141 aa).

The segment at M1–A21 is disordered.

Belongs to the universal ribosomal protein uL16 family. Part of the 50S ribosomal subunit.

Binds 23S rRNA and is also seen to make contacts with the A and possibly P site tRNAs. In Roseiflexus castenholzii (strain DSM 13941 / HLO8), this protein is Large ribosomal subunit protein uL16.